Reading from the N-terminus, the 234-residue chain is Serum amyloid P-component (234 aa).

The signal sequence occupies residues 1-22 (MDKLLSLLGVSILAGLLLEAFA). A Pentraxin (PTX) domain is found at 27–226 (TGKVFVFPRQ…YAVIRPRCVA (200 aa)). N-linked (GlcNAc...) asparagine glycosylation is present at Asn-54. A disulfide bridge links Cys-58 with Cys-117. Ca(2+) is bound by residues Asn-81, Glu-158, Gln-159, Asp-160, and Gln-170.

This sequence belongs to the pentraxin family. In terms of assembly, homopentamer. Pentraxin (or pentaxin) have a discoid arrangement of 5 non-covalently bound subunits. Ca(2+) serves as cofactor.

The protein localises to the secreted. This chain is Serum amyloid P-component (APCS), found in Mesocricetus auratus (Golden hamster).